Reading from the N-terminus, the 458-residue chain is UDP-N-acetylmuramoylalanine--D-glutamate ligase (458 aa).

119–125 (GSNGKTT) lines the ATP pocket.

The protein belongs to the MurCDEF family.

The protein resides in the cytoplasm. The catalysed reaction is UDP-N-acetyl-alpha-D-muramoyl-L-alanine + D-glutamate + ATP = UDP-N-acetyl-alpha-D-muramoyl-L-alanyl-D-glutamate + ADP + phosphate + H(+). It participates in cell wall biogenesis; peptidoglycan biosynthesis. In terms of biological role, cell wall formation. Catalyzes the addition of glutamate to the nucleotide precursor UDP-N-acetylmuramoyl-L-alanine (UMA). The chain is UDP-N-acetylmuramoylalanine--D-glutamate ligase from Limosilactobacillus fermentum (strain NBRC 3956 / LMG 18251) (Lactobacillus fermentum).